Reading from the N-terminus, the 168-residue chain is Transcriptional repressor NrdR (168 aa).

Residues 3-34 fold into a zinc finger; sequence CPFCQDAENKVIDSRESHEGSVIRRRRECLTC. Positions 49–139 constitute an ATP-cone domain; that stretch reads PLIVKKDGRR…VYRSFRDIAE (91 aa).

It belongs to the NrdR family. It depends on Zn(2+) as a cofactor.

Negatively regulates transcription of bacterial ribonucleotide reductase nrd genes and operons by binding to NrdR-boxes. The protein is Transcriptional repressor NrdR of Myxococcus xanthus (strain DK1622).